The primary structure comprises 947 residues: Bromodomain testis-specific protein (947 aa).

In terms of domain architecture, Bromo 1 spans 27–133 (RLTNQLQYLQ…KLFVQKLSQM (107 aa)). At Ser187 the chain carries Phosphoserine. The Nuclear localization signal signature appears at 209–220 (KGVKRKADTTTP). In terms of domain architecture, Bromo 2 spans 267 to 376 (VKVTEQLRHC…DVFETHFSKI (110 aa)). Disordered stretches follow at residues 395-421 (ETTGRENTNEASSEGNSSGDSEDERVQ), 444-512 (PFRK…PMNY), 610-690 (NNQL…VKKM), and 849-873 (HLEQNTKEPKVSQENQRDLGNGLTV). Residues 403–413 (NEASSEGNSSG) show a composition bias toward low complexity. The stretch at 417–470 (DERVQRLAKLQEQLKAVHQQLQVLSQVPFRKLNKKKEKSKKEKKKEKVNNSNEN) forms a coiled coil. Basic residues predominate over residues 447–462 (KLNKKKEKSKKEKKKE). Basic and acidic residues predominate over residues 470–481 (NPRKMCEQMRLK). Residues 482 to 494 (EKSKRNQPKKRKQ) show a composition bias toward basic residues. The NET domain occupies 500–582 (KSEDEDNAKP…ACLRKRPLKP (83 aa)). A compositionally biased stretch (low complexity) spans 631–668 (VGSVSRLSESSSSSSSSSESESSSSDLSSSDSSGSESE). 2 stretches are compositionally biased toward basic and acidic residues: residues 674–690 (TEVKPNDSPSKENVKKM) and 849–865 (HLEQNTKEPKVSQENQR).

This sequence belongs to the BET family. In terms of assembly, interacts with SMARCE1. Interacts with mRNA splicing machinery proteins SRSF2, DDX5, HNRNPK and TARDBP. Interacts with the acetylated N-terminus of histone H1, H2, H3 and H4. Interacts with P-TEFb components CDK9 and CCNT1/cyclin-T1. In terms of processing, ubiquitinated in a SPOP-dependent manner, leading to proteasomal degradation.

Its subcellular location is the nucleus. Its function is as follows. Testis-specific chromatin protein that specifically binds histone H4 acetylated at 'Lys-5' and 'Lys-8' (H4K5ac and H4K8ac, respectively) and plays a key role in spermatogenesis. Required in late pachytene spermatocytes: plays a role in meiotic and post-meiotic cells by binding to acetylated histones at the promoter of specific meiotic and post-meiotic genes, facilitating their activation at the appropriate time. In the post-meiotic phase of spermatogenesis, binds to hyperacetylated histones and participates in their general removal from DNA. Also recognizes and binds a subset of butyrylated histones: able to bind histone H4 butyrylated at 'Lys-8' (H4K8ac), while it is not able to bind H4 butyrylated at 'Lys-5' (H4K5ac). Also acts as a component of the splicing machinery in pachytene spermatocytes and round spermatids and participates in 3'-UTR truncation of specific mRNAs in post-meiotic spermatids. Required for chromocenter organization, a structure comprised of peri-centromeric heterochromatin. The sequence is that of Bromodomain testis-specific protein (BRDT) from Macaca fascicularis (Crab-eating macaque).